Reading from the N-terminus, the 105-residue chain is Ferredoxin (105 aa).

Residues C8 and C16 each contribute to the [3Fe-4S] cluster site. [4Fe-4S] cluster-binding residues include C20, C39, C42, and C45. The 30-residue stretch at 30-59 folds into the 4Fe-4S ferredoxin-type domain; the sequence is RSLYIHPDECVDCGACEPVCPVEAIFYEDD. A [3Fe-4S] cluster-binding site is contributed by C49.

Requires [4Fe-4S] cluster as cofactor. [3Fe-4S] cluster serves as cofactor.

In terms of biological role, ferredoxins are iron-sulfur proteins that transfer electrons in a wide variety of metabolic reactions. Putative electron transport protein for the cytochrome P-450SOY system from the same organism. This is Ferredoxin from Streptomyces griseus.